A 106-amino-acid chain; its full sequence is UPF0213 protein KPN78578_35340 (106 aa).

One can recognise a GIY-YIG domain in the interval 13-88 (VCWFLYLIRT…KQLTKREKER (76 aa)).

This sequence belongs to the UPF0213 family.

In Klebsiella pneumoniae subsp. pneumoniae (strain ATCC 700721 / MGH 78578), this protein is UPF0213 protein KPN78578_35340.